The following is a 323-amino-acid chain: Arginase-1 (323 aa).

The segment at 1-27 (MSSKPKSLEIIGAPFSKGQPRGGVEKG) is disordered. Ser-7 carries the post-translational modification Phosphoserine. Position 17 is an N6-succinyllysine (Lys-17). Ser-62 and Ser-72 each carry phosphoserine. Lys-75 is modified (N6-succinyllysine). Mn(2+) is bound by residues His-101, Asp-124, His-126, and Asp-128. Residues 126–130 (HTDIN) and 137–139 (SGN) contribute to the substrate site. Ser-163 bears the Phosphoserine mark. Asp-183 contacts substrate. Ser-217 carries the phosphoserine modification. Residues Asp-232 and Asp-234 each coordinate Mn(2+). Positions 246 and 277 each coordinate substrate. Thr-281 carries the phosphothreonine modification.

This sequence belongs to the arginase family. In terms of assembly, homotrimer. Interacts with CMTM6. Mn(2+) serves as cofactor. In terms of tissue distribution, expressed in macrophages. Expressed in precursor and mature group 2 innate lymphoid cells (ILC2s). Expressed in lung tumor-associated myeloid cells. Expressed in lung tumor-infiltrating dendritic cells.

It localises to the cytoplasm. The protein resides in the cytoplasmic granule. It carries out the reaction L-arginine + H2O = urea + L-ornithine. It functions in the pathway nitrogen metabolism; urea cycle; L-ornithine and urea from L-arginine: step 1/1. In terms of biological role, key element of the urea cycle converting L-arginine to urea and L-ornithine, which is further metabolized into metabolites proline and polyamides that drive collagen synthesis and bioenergetic pathways critical for cell proliferation, respectively; the urea cycle takes place primarily in the liver and, to a lesser extent, in the kidneys. Functions in L-arginine homeostasis in nonhepatic tissues characterized by the competition between nitric oxide synthase (NOS) and arginase for the available intracellular substrate arginine. Arginine metabolism is a critical regulator of innate and adaptive immune responses. Involved in an antimicrobial effector pathway in polymorphonuclear granulocytes (PMN). Upon PMN cell death is liberated from the phagolysosome and depletes arginine in the microenvironment leading to suppressed T cell and natural killer (NK) cell proliferation and cytokine secretion. In group 2 innate lymphoid cells (ILC2s) promotes acute type 2 inflammation in the lung and is involved in optimal ILC2 proliferation but not survival. Plays a role in the immune response of alternatively activated or M2 macrophages in processes such as wound healing and tissue regeneration, immune defense against multicellular pathogens and parasites, and immune suppression and allergic inflammation; the regulatory outcome seems to be organ specific. In tumor-infiltrating dendritic cells (DCs) and myeloid-derived suppressor cells (MDSCs) plays a role in suppression of T cell-mediated antitumor immunity. The polypeptide is Arginase-1 (Arg1) (Mus musculus (Mouse)).